We begin with the raw amino-acid sequence, 1466 residues long: Helicase ARIP4 (1466 aa).

Disordered regions lie at residues methionine 1–lysine 137 and aspartate 185–asparagine 235. Positions proline 11–serine 49 are enriched in acidic residues. A compositionally biased stretch (low complexity) spans threonine 72 to serine 82. The span at lysine 99–lysine 114 shows a compositional bias: basic residues. Residues lysine 114 and lysine 126 each participate in a glycyl lysine isopeptide (Lys-Gly) (interchain with G-Cter in SUMO2) cross-link. Residues glutamate 191–valine 200 show a composition bias toward basic and acidic residues. Lysine 271 is covalently cross-linked (Glycyl lysine isopeptide (Lys-Gly) (interchain with G-Cter in SUMO2)). Residues arginine 291 to aspartate 511 enclose the Helicase ATP-binding domain. Histidine 304 to threonine 311 contributes to the ATP binding site. Positions aspartate 462–histidine 465 match the DEAH box motif. The LXXLL motif 1 motif lies at leucine 550–leucine 554. Positions serine 649–leucine 670 are disordered. Glycyl lysine isopeptide (Lys-Gly) (interchain with G-Cter in SUMO2) cross-links involve residues lysine 664, lysine 681, lysine 758, lysine 900, lysine 1013, and lysine 1017. The Helicase C-terminal domain maps to histidine 727–leucine 895. Disordered regions lie at residues glutamine 1026 to serine 1045 and alanine 1120 to aspartate 1170. Residues serine 1135–serine 1154 are compositionally biased toward polar residues. Phosphoserine occurs at positions 1168 and 1171. 2 disordered regions span residues valine 1184–serine 1212 and threonine 1259–glutamine 1281. Position 1259 is a phosphothreonine (threonine 1259). The LXXLL motif 2 signature appears at leucine 1328–leucine 1332. The tract at residues alanine 1444 to lysine 1466 is disordered. Residues asparagine 1451 to lysine 1466 are compositionally biased toward acidic residues.

This sequence belongs to the SNF2/RAD54 helicase family. In terms of assembly, interacts with AR via its N-terminus. Interacts with DYRK1A. Binds DNA and mononucleosomes, but does not seem to form large multiprotein complexes. In terms of processing, sumoylated. Expressed at relatively low level, with highest expression in testis, liver and kidney. In brain, it is expressed in hippocampal and cerebellar neurons. In testis, it is present at high level in Sertoli cell nuclei. Also present in Leydig cell (at protein level).

The protein localises to the nucleus. It catalyses the reaction ATP + H2O = ADP + phosphate + H(+). Its activity is regulated as follows. Enzyme activity is enhanced by dsDNA (double-stranded DNA) and ssDNA (single-stranded DNA). In terms of biological role, DNA helicase that modulates androgen receptor (AR)-dependent transactivation in a promoter-dependent manner. Not able to remodel mononucleosomes in vitro. Acts as an AR-coregulator in Sertoli cells. The chain is Helicase ARIP4 (Rad54l2) from Mus musculus (Mouse).